The chain runs to 201 residues: Protein GrpE (201 aa).

Belongs to the GrpE family. As to quaternary structure, homodimer.

It localises to the cytoplasm. Its function is as follows. Participates actively in the response to hyperosmotic and heat shock by preventing the aggregation of stress-denatured proteins, in association with DnaK and GrpE. It is the nucleotide exchange factor for DnaK and may function as a thermosensor. Unfolded proteins bind initially to DnaJ; upon interaction with the DnaJ-bound protein, DnaK hydrolyzes its bound ATP, resulting in the formation of a stable complex. GrpE releases ADP from DnaK; ATP binding to DnaK triggers the release of the substrate protein, thus completing the reaction cycle. Several rounds of ATP-dependent interactions between DnaJ, DnaK and GrpE are required for fully efficient folding. This chain is Protein GrpE, found in Shewanella denitrificans (strain OS217 / ATCC BAA-1090 / DSM 15013).